Consider the following 466-residue polypeptide: 3-isopropylmalate dehydratase large subunit (466 aa).

[4Fe-4S] cluster contacts are provided by cysteine 347, cysteine 407, and cysteine 410.

The protein belongs to the aconitase/IPM isomerase family. LeuC type 1 subfamily. In terms of assembly, heterodimer of LeuC and LeuD. Requires [4Fe-4S] cluster as cofactor.

It carries out the reaction (2R,3S)-3-isopropylmalate = (2S)-2-isopropylmalate. The protein operates within amino-acid biosynthesis; L-leucine biosynthesis; L-leucine from 3-methyl-2-oxobutanoate: step 2/4. Catalyzes the isomerization between 2-isopropylmalate and 3-isopropylmalate, via the formation of 2-isopropylmaleate. This Vibrio vulnificus (strain YJ016) protein is 3-isopropylmalate dehydratase large subunit.